A 291-amino-acid chain; its full sequence is 4-hydroxy-tetrahydrodipicolinate synthase (291 aa).

T44 lines the pyruvate pocket. Y132 functions as the Proton donor/acceptor in the catalytic mechanism. Catalysis depends on K160, which acts as the Schiff-base intermediate with substrate. Pyruvate is bound at residue I202.

The protein belongs to the DapA family. Homotetramer; dimer of dimers.

Its subcellular location is the cytoplasm. It carries out the reaction L-aspartate 4-semialdehyde + pyruvate = (2S,4S)-4-hydroxy-2,3,4,5-tetrahydrodipicolinate + H2O + H(+). Its pathway is amino-acid biosynthesis; L-lysine biosynthesis via DAP pathway; (S)-tetrahydrodipicolinate from L-aspartate: step 3/4. Functionally, catalyzes the condensation of (S)-aspartate-beta-semialdehyde [(S)-ASA] and pyruvate to 4-hydroxy-tetrahydrodipicolinate (HTPA). The polypeptide is 4-hydroxy-tetrahydrodipicolinate synthase (Zymomonas mobilis subsp. mobilis (strain ATCC 31821 / ZM4 / CP4)).